Reading from the N-terminus, the 544-residue chain is Chromosomal replication initiator protein DnaA (544 aa).

A domain I, interacts with DnaA modulators region spans residues 1-71; the sequence is MNDFWQHCSA…ADMARDFWHT (71 aa). Residues 71–207 form a domain II region; it reads TPIDVQFVLD…GETDSMYERS (137 aa). Residues 90 to 105 show a composition bias toward low complexity; sequence AAAPAPASARPASAPG. Disordered regions lie at residues 90–111 and 180–203; these read AAAP…GGSA and AAAR…TDSM. Positions 191-200 are enriched in polar residues; that stretch reads SAGSNGNGET. The interval 208-424 is domain III, AAA+ region; sequence KLNPVLTFDN…GALRKILAYS (217 aa). Residues glycine 252, glycine 254, lysine 255, and threonine 256 each coordinate ATP. The domain IV, binds dsDNA stretch occupies residues 425–544; that stretch reads KFHGREITIE…LHVLEQTLKG (120 aa).

This sequence belongs to the DnaA family. In terms of assembly, oligomerizes as a right-handed, spiral filament on DNA at oriC.

The protein resides in the cytoplasm. Functionally, plays an essential role in the initiation and regulation of chromosomal replication. ATP-DnaA binds to the origin of replication (oriC) to initiate formation of the DNA replication initiation complex once per cell cycle. Binds the DnaA box (a 9 base pair repeat at the origin) and separates the double-stranded (ds)DNA. Forms a right-handed helical filament on oriC DNA; dsDNA binds to the exterior of the filament while single-stranded (ss)DNA is stabiized in the filament's interior. The ATP-DnaA-oriC complex binds and stabilizes one strand of the AT-rich DNA unwinding element (DUE), permitting loading of DNA polymerase. After initiation quickly degrades to an ADP-DnaA complex that is not apt for DNA replication. Binds acidic phospholipids. The protein is Chromosomal replication initiator protein DnaA of Paraburkholderia xenovorans (strain LB400).